The chain runs to 303 residues: Eukaryotic translation initiation factor 3 subunit G (303 aa).

4 disordered regions span residues Met1–Val32, Gly81–Asn100, Pro105–Lys126, and Gly181–Lys215. Basic and acidic residues predominate over residues Trp109–Lys126. The region spanning Ala223 to Lys301 is the RRM domain.

Belongs to the eIF-3 subunit G family. In terms of assembly, component of the eukaryotic translation initiation factor 3 (eIF-3) complex.

It localises to the cytoplasm. RNA-binding component of the eukaryotic translation initiation factor 3 (eIF-3) complex, which is involved in protein synthesis of a specialized repertoire of mRNAs and, together with other initiation factors, stimulates binding of mRNA and methionyl-tRNAi to the 40S ribosome. The eIF-3 complex specifically targets and initiates translation of a subset of mRNAs involved in cell proliferation. This subunit can bind 18S rRNA. In Pyricularia oryzae (strain 70-15 / ATCC MYA-4617 / FGSC 8958) (Rice blast fungus), this protein is Eukaryotic translation initiation factor 3 subunit G.